The following is a 428-amino-acid chain: 3-phosphoshikimate 1-carboxyvinyltransferase (428 aa).

3-phosphoshikimate-binding residues include lysine 22, serine 23, and arginine 27. Lysine 22 provides a ligand contact to phosphoenolpyruvate. Residues glycine 96 and arginine 124 each coordinate phosphoenolpyruvate. The 3-phosphoshikimate site is built by serine 170, serine 171, glutamine 172, serine 198, aspartate 314, asparagine 337, and lysine 341. Residue glutamine 172 participates in phosphoenolpyruvate binding. Aspartate 314 (proton acceptor) is an active-site residue. Phosphoenolpyruvate-binding residues include arginine 345, arginine 387, and lysine 412.

It belongs to the EPSP synthase family. In terms of assembly, monomer.

The protein localises to the cytoplasm. It catalyses the reaction 3-phosphoshikimate + phosphoenolpyruvate = 5-O-(1-carboxyvinyl)-3-phosphoshikimate + phosphate. Its pathway is metabolic intermediate biosynthesis; chorismate biosynthesis; chorismate from D-erythrose 4-phosphate and phosphoenolpyruvate: step 6/7. Catalyzes the transfer of the enolpyruvyl moiety of phosphoenolpyruvate (PEP) to the 5-hydroxyl of shikimate-3-phosphate (S3P) to produce enolpyruvyl shikimate-3-phosphate and inorganic phosphate. This chain is 3-phosphoshikimate 1-carboxyvinyltransferase, found in Shewanella amazonensis (strain ATCC BAA-1098 / SB2B).